We begin with the raw amino-acid sequence, 101 residues long: Long chronological lifespan protein 1 (101 aa).

The first 17 residues, 1–17 (MKNAALCEALPLLATCS), serve as a signal peptide directing secretion. Ser-81 is lipidated: GPI-anchor amidated serine. A propeptide spans 82–101 (FAKPSFSFFFFLLTSLLSPF) (removed in mature form).

Its subcellular location is the cell membrane. In Saccharomyces cerevisiae (strain ATCC 204508 / S288c) (Baker's yeast), this protein is Long chronological lifespan protein 1 (LCL1).